Consider the following 333-residue polypeptide: Biotin synthase (333 aa).

A Radical SAM core domain is found at 54-287 (ANHGAIHACS…TKIIKFAAGR (234 aa)). [4Fe-4S] cluster contacts are provided by Cys72, Cys76, and Cys79. Cys151, Cys212, and Lys282 together coordinate [2Fe-2S] cluster.

Belongs to the radical SAM superfamily. Biotin synthase family. In terms of assembly, homodimer. [4Fe-4S] cluster is required as a cofactor. It depends on [2Fe-2S] cluster as a cofactor.

It carries out the reaction (4R,5S)-dethiobiotin + (sulfur carrier)-SH + 2 reduced [2Fe-2S]-[ferredoxin] + 2 S-adenosyl-L-methionine = (sulfur carrier)-H + biotin + 2 5'-deoxyadenosine + 2 L-methionine + 2 oxidized [2Fe-2S]-[ferredoxin]. It participates in cofactor biosynthesis; biotin biosynthesis; biotin from 7,8-diaminononanoate: step 2/2. In terms of biological role, catalyzes the conversion of dethiobiotin (DTB) to biotin by the insertion of a sulfur atom into dethiobiotin via a radical-based mechanism. The sequence is that of Biotin synthase from Chlorobaculum tepidum (strain ATCC 49652 / DSM 12025 / NBRC 103806 / TLS) (Chlorobium tepidum).